The sequence spans 424 residues: Tyrosine--tRNA ligase (424 aa).

Tyr37 lines the L-tyrosine pocket. The short motif at 42-51 (PTADSLHLGH) is the 'HIGH' region element. L-tyrosine contacts are provided by Tyr174 and Gln178. Positions 234 to 238 (KFGKT) match the 'KMSKS' region motif. Lys237 serves as a coordination point for ATP. The S4 RNA-binding domain occupies 357-414 (TGLIDALVASGLAKSKSEARTFIQSGSVAINGNKAEALDHAIGGDELLYGRFTILRRG).

The protein belongs to the class-I aminoacyl-tRNA synthetase family. TyrS type 1 subfamily. In terms of assembly, homodimer.

Its subcellular location is the cytoplasm. It catalyses the reaction tRNA(Tyr) + L-tyrosine + ATP = L-tyrosyl-tRNA(Tyr) + AMP + diphosphate + H(+). In terms of biological role, catalyzes the attachment of tyrosine to tRNA(Tyr) in a two-step reaction: tyrosine is first activated by ATP to form Tyr-AMP and then transferred to the acceptor end of tRNA(Tyr). The protein is Tyrosine--tRNA ligase of Dechloromonas aromatica (strain RCB).